Here is a 1377-residue protein sequence, read N- to C-terminus: Clustered mitochondria protein homolog (1377 aa).

The disordered stretch occupies residues 1 to 61 (MLKSIQRNGK…GETKKKSDSE (61 aa)). The 243-residue stretch at 353–595 (RAEDTFSSKL…RTFPPDVNFL (243 aa)) folds into the Clu domain. One copy of the TPR 1 repeat lies at 519-552 (VYGSIDFGKTVLSHEKYLELLNNAGKHLKIYPHS). Disordered regions lie at residues 651 to 700 (NKRQ…VPKV) and 886 to 917 (DVLT…KSSF). Residues 655-690 (QKQDTPKEETKAIEPAAKEDSANNNKEEPAAKKGEP) show a composition bias toward basic and acidic residues. Polar residues predominate over residues 886-896 (DVLTKSGSSGK). 3 TPR repeats span residues 1022-1055 (AYNF…LNNV), 1148-1181 (ALLD…NIKY), and 1183-1216 (GEKS…EKET). Residues 1310 to 1377 (KEGGAAGESS…SKANPVASSS (68 aa)) form a disordered region. Low complexity predominate over residues 1364 to 1377 (ASSSSKANPVASSS).

It belongs to the CLU family.

It is found in the cytoplasm. Its function is as follows. mRNA-binding protein involved in proper cytoplasmic distribution of mitochondria. This is Clustered mitochondria protein homolog from Culex quinquefasciatus (Southern house mosquito).